A 187-amino-acid chain; its full sequence is Acireductone dioxygenase (187 aa).

H87, H89, E93, and H136 together coordinate Fe(2+). Residues H87, H89, E93, and H136 each contribute to the Ni(2+) site.

It belongs to the acireductone dioxygenase (ARD) family. Requires Fe(2+) as cofactor. Ni(2+) is required as a cofactor.

The protein localises to the cytoplasm. It localises to the nucleus. The catalysed reaction is 1,2-dihydroxy-5-(methylsulfanyl)pent-1-en-3-one + O2 = 4-methylsulfanyl-2-oxobutanoate + formate + 2 H(+). It catalyses the reaction 1,2-dihydroxy-5-(methylsulfanyl)pent-1-en-3-one + O2 = 3-(methylsulfanyl)propanoate + CO + formate + 2 H(+). Its pathway is amino-acid biosynthesis; L-methionine biosynthesis via salvage pathway; L-methionine from S-methyl-5-thio-alpha-D-ribose 1-phosphate: step 5/6. Functionally, catalyzes 2 different reactions between oxygen and the acireductone 1,2-dihydroxy-3-keto-5-methylthiopentene (DHK-MTPene) depending upon the metal bound in the active site. Fe-containing acireductone dioxygenase (Fe-ARD) produces formate and 2-keto-4-methylthiobutyrate (KMTB), the alpha-ketoacid precursor of methionine in the methionine recycle pathway. Ni-containing acireductone dioxygenase (Ni-ARD) produces methylthiopropionate, carbon monoxide and formate, and does not lie on the methionine recycle pathway. This chain is Acireductone dioxygenase, found in Cryptococcus neoformans var. neoformans serotype D (strain JEC21 / ATCC MYA-565) (Filobasidiella neoformans).